The following is a 736-amino-acid chain: Melanotransferrin (736 aa).

Positions 1 to 19 are cleaved as a signal peptide; that stretch reads MRCRSAAMWIFLALRTALG. 2 consecutive Transferrin-like domains span residues 23 to 357 and 366 to 706; these read VRWC…GLLC and LRWC…GMQS. Intrachain disulfides connect Cys-26–Cys-63 and Cys-36–Cys-54. Asp-78 and Tyr-107 together coordinate Fe(3+). The N-linked (GlcNAc...) asparagine glycan is linked to Asn-118. Cystine bridges form between Cys-130–Cys-216, Cys-172–Cys-189, Cys-186–Cys-199, and Cys-257–Cys-271. Thr-132 lines the hydrogencarbonate pocket. Residue Asn-135 is glycosylated (N-linked (GlcNAc...) asparagine). Arg-136, Val-138, and Gly-139 together coordinate hydrogencarbonate. Tyr-210 contributes to the Fe(3+) binding site. Fe(3+) contacts are provided by His-279 and Tyr-451. Residue Asn-515 is glycosylated (N-linked (GlcNAc...) asparagine). Residue His-625 participates in Fe(3+) binding. Gly-711 is lipidated: GPI-anchor amidated glycine. Residues 712 to 736 constitute a propeptide, removed in mature form; that stretch reads AAVGAPGASLLPLLPLAVGLLLSSL.

This sequence belongs to the transferrin family.

The protein localises to the cell membrane. Its function is as follows. Involved in iron cellular uptake. Seems to be internalized and then recycled back to the cell membrane. Binds a single atom of iron per subunit. Could also bind zinc. This is Melanotransferrin from Oryctolagus cuniculus (Rabbit).